Here is a 149-residue protein sequence, read N- to C-terminus: Ribonuclease H (149 aa).

One can recognise an RNase H type-1 domain in the interval Q4–D145. The Mg(2+) site is built by D13, E51, D73, and D137.

This sequence belongs to the RNase H family. Monomer. Mg(2+) is required as a cofactor.

Its subcellular location is the cytoplasm. The catalysed reaction is Endonucleolytic cleavage to 5'-phosphomonoester.. Endonuclease that specifically degrades the RNA of RNA-DNA hybrids. This chain is Ribonuclease H, found in Halorhodospira halophila (strain DSM 244 / SL1) (Ectothiorhodospira halophila (strain DSM 244 / SL1)).